A 441-amino-acid polypeptide reads, in one-letter code: D-inositol 3-phosphate glycosyltransferase (441 aa).

His38 contacts 1D-myo-inositol 3-phosphate. UDP-N-acetyl-alpha-D-glucosamine-binding positions include 44–45 and Gly52; that span reads QP. 1D-myo-inositol 3-phosphate contacts are provided by residues 49-54, Lys107, Tyr140, Thr164, and Arg184; that span reads DAGGMN. Residues Arg258, Lys263, and Gln316 each contribute to the UDP-N-acetyl-alpha-D-glucosamine site. Mg(2+) is bound by residues Phe325, Gln326, and Ala328. UDP-N-acetyl-alpha-D-glucosamine is bound by residues Glu338 and Glu346. Thr352 is a Mg(2+) binding site.

This sequence belongs to the glycosyltransferase group 1 family. MshA subfamily. In terms of assembly, homodimer.

It catalyses the reaction 1D-myo-inositol 3-phosphate + UDP-N-acetyl-alpha-D-glucosamine = 1D-myo-inositol 2-acetamido-2-deoxy-alpha-D-glucopyranoside 3-phosphate + UDP + H(+). Catalyzes the transfer of a N-acetyl-glucosamine moiety to 1D-myo-inositol 3-phosphate to produce 1D-myo-inositol 2-acetamido-2-deoxy-glucopyranoside 3-phosphate in the mycothiol biosynthesis pathway. This Mycolicibacterium paratuberculosis (strain ATCC BAA-968 / K-10) (Mycobacterium paratuberculosis) protein is D-inositol 3-phosphate glycosyltransferase.